A 401-amino-acid chain; its full sequence is Mitochondrial distribution and morphology protein 12 (401 aa).

One can recognise an SMP-LTD domain in the interval 1–401 (MSIDINWDTL…VYPSFWTFLV (401 aa)). Acidic residues predominate over residues 70–88 (YEEDEDYPDNEDDDDDEAG). Disordered regions lie at residues 70–95 (YEED…NPRN) and 190–247 (SLTL…EKSP). Over residues 195-205 (PQSHPDPSSRP) the composition is skewed to low complexity. Positions 209 to 220 (HQHDDERRRSLA) are enriched in basic and acidic residues.

This sequence belongs to the MDM12 family. As to quaternary structure, component of the ER-mitochondria encounter structure (ERMES) or MDM complex, composed of MMM1, MDM10, MDM12 and MDM34. An MMM1 homodimer associates with one molecule of MDM12 on each side in a pairwise head-to-tail manner, and the SMP-LTD domains of MMM1 and MDM12 generate a continuous hydrophobic tunnel for phospholipid trafficking.

The protein resides in the mitochondrion outer membrane. Its subcellular location is the endoplasmic reticulum membrane. Its function is as follows. Component of the ERMES/MDM complex, which serves as a molecular tether to connect the endoplasmic reticulum (ER) and mitochondria. Components of this complex are involved in the control of mitochondrial shape and protein biogenesis, and function in nonvesicular lipid trafficking between the ER and mitochondria. MDM12 is required for the interaction of the ER-resident membrane protein MMM1 and the outer mitochondrial membrane-resident beta-barrel protein MDM10. The MDM12-MMM1 subcomplex functions in the major beta-barrel assembly pathway that is responsible for biogenesis of all mitochondrial outer membrane beta-barrel proteins, and acts in a late step after the SAM complex. The MDM10-MDM12-MMM1 subcomplex further acts in the TOM40-specific pathway after the action of the MDM12-MMM1 complex. Essential for establishing and maintaining the structure of mitochondria and maintenance of mtDNA nucleoids. The polypeptide is Mitochondrial distribution and morphology protein 12 (Phaeosphaeria nodorum (strain SN15 / ATCC MYA-4574 / FGSC 10173) (Glume blotch fungus)).